Consider the following 518-residue polypeptide: 2-isopropylmalate synthase (518 aa).

One can recognise a Pyruvate carboxyltransferase domain in the interval 5–269 (IIVLDTTLRD…STNVRLKELI (265 aa)). Mn(2+)-binding residues include D14, H204, H206, and N240. Residues 397-518 (ELDSFQVVTN…HDSQAPVSAR (122 aa)) are regulatory domain.

This sequence belongs to the alpha-IPM synthase/homocitrate synthase family. LeuA type 1 subfamily. In terms of assembly, homodimer. The cofactor is Mn(2+).

It localises to the cytoplasm. It catalyses the reaction 3-methyl-2-oxobutanoate + acetyl-CoA + H2O = (2S)-2-isopropylmalate + CoA + H(+). It participates in amino-acid biosynthesis; L-leucine biosynthesis; L-leucine from 3-methyl-2-oxobutanoate: step 1/4. In terms of biological role, catalyzes the condensation of the acetyl group of acetyl-CoA with 3-methyl-2-oxobutanoate (2-ketoisovalerate) to form 3-carboxy-3-hydroxy-4-methylpentanoate (2-isopropylmalate). The protein is 2-isopropylmalate synthase of Geobacillus sp. (strain Y412MC10).